The following is a 169-amino-acid chain: Probable inosine/xanthosine triphosphatase (169 aa).

7-12 (STNKAK) provides a ligand contact to substrate. E35 lines the Mg(2+) pocket.

The protein belongs to the YjjX NTPase family. In terms of assembly, homodimer. Requires Mg(2+) as cofactor. It depends on Mn(2+) as a cofactor.

The enzyme catalyses XTP + H2O = XDP + phosphate + H(+). It catalyses the reaction ITP + H2O = IDP + phosphate + H(+). Phosphatase that hydrolyzes non-canonical purine nucleotides such as XTP and ITP to their respective diphosphate derivatives. Probably excludes non-canonical purines from DNA/RNA precursor pool, thus preventing their incorporation into DNA/RNA and avoiding chromosomal lesions. This Sulfurisphaera tokodaii (strain DSM 16993 / JCM 10545 / NBRC 100140 / 7) (Sulfolobus tokodaii) protein is Probable inosine/xanthosine triphosphatase.